Reading from the N-terminus, the 543-residue chain is Mannuronan C5-epimerase (543 aa).

A signal peptide spans 1-35 (MPDISLSIPRRRLPRLRPLAAAVLGAVLLHGQAWA). PbH1 repeat units lie at residues 243–270 (GAEV…SISQ), 283–304 (RPKG…YCYE), 305–327 (ADDL…DPHD), 329–352 (SHRL…IVSR), 354–376 (VNDS…VLDR), 378–400 (SEGN…TLYE), and 401–423 (SGDN…RVRN). The active-site Proton acceptor is the His326.

This sequence belongs to the D-mannuronate C5-epimerase family.

It is found in the periplasm. The enzyme catalyses [(1-&gt;4)-beta-D-mannuronosyl](n) = [alginate](n). It functions in the pathway glycan biosynthesis; alginate biosynthesis. With respect to regulation, inhibited by the presence of acetyl groups on the substrate. In terms of biological role, catalyzes the epimerization of beta-D-mannuronate to alpha-L-guluronate during the synthesis of the linear polysaccharide alginate. In addition, is part of a periplasmic protein complex that protects alginate from degradation by AlgL by channeling the newly formed alginate polymer through a scaffold that transfers the alginate polymer through the periplasmic space to the outer membrane secretin AlgE. In Pseudomonas aeruginosa (strain ATCC 15692 / DSM 22644 / CIP 104116 / JCM 14847 / LMG 12228 / 1C / PRS 101 / PAO1), this protein is Mannuronan C5-epimerase.